Consider the following 162-residue polypeptide: Probable chemoreceptor glutamine deamidase CheD (162 aa).

The protein belongs to the CheD family.

It carries out the reaction L-glutaminyl-[protein] + H2O = L-glutamyl-[protein] + NH4(+). Functionally, probably deamidates glutamine residues to glutamate on methyl-accepting chemotaxis receptors (MCPs), playing an important role in chemotaxis. The protein is Probable chemoreceptor glutamine deamidase CheD of Clostridium novyi (strain NT).